Reading from the N-terminus, the 156-residue chain is Small ribosomal subunit protein uS7 (156 aa).

Belongs to the universal ribosomal protein uS7 family. Part of the 30S ribosomal subunit. Contacts proteins S9 and S11.

In terms of biological role, one of the primary rRNA binding proteins, it binds directly to 16S rRNA where it nucleates assembly of the head domain of the 30S subunit. Is located at the subunit interface close to the decoding center, probably blocks exit of the E-site tRNA. This Rhizobium meliloti (strain 1021) (Ensifer meliloti) protein is Small ribosomal subunit protein uS7.